The chain runs to 74 residues: U2-sicaritoxin-Sdo1a (74 aa).

The signal sequence occupies residues 1-20; sequence MKLSFCFFLCAIVLFSFAEA. A propeptide spanning residues 21–39 is cleaved from the precursor; sequence RINPNQLKRLRELVRDDEP. 3 disulfide bridges follow: Cys42/Cys59, Cys49/Cys62, and Cys58/Cys71.

Expressed by the venom gland.

It is found in the secreted. This Hexophthalma dolichocephala (Afrotropical spider) protein is U2-sicaritoxin-Sdo1a.